A 297-amino-acid chain; its full sequence is 33 kDa chaperonin (297 aa).

Intrachain disulfides connect C239/C241 and C272/C275.

The protein belongs to the HSP33 family. Under oxidizing conditions two disulfide bonds are formed involving the reactive cysteines. Under reducing conditions zinc is bound to the reactive cysteines and the protein is inactive.

The protein resides in the cytoplasm. Redox regulated molecular chaperone. Protects both thermally unfolding and oxidatively damaged proteins from irreversible aggregation. Plays an important role in the bacterial defense system toward oxidative stress. The sequence is that of 33 kDa chaperonin from Synechococcus elongatus (strain ATCC 33912 / PCC 7942 / FACHB-805) (Anacystis nidulans R2).